Consider the following 494-residue polypeptide: Guanosine-5'-triphosphate,3'-diphosphate pyrophosphatase (494 aa).

It belongs to the GppA/Ppx family. GppA subfamily.

It catalyses the reaction guanosine 3'-diphosphate 5'-triphosphate + H2O = guanosine 3',5'-bis(diphosphate) + phosphate + H(+). It participates in purine metabolism; ppGpp biosynthesis; ppGpp from GTP: step 2/2. Its function is as follows. Catalyzes the conversion of pppGpp to ppGpp. Guanosine pentaphosphate (pppGpp) is a cytoplasmic signaling molecule which together with ppGpp controls the 'stringent response', an adaptive process that allows bacteria to respond to amino acid starvation, resulting in the coordinated regulation of numerous cellular activities. This is Guanosine-5'-triphosphate,3'-diphosphate pyrophosphatase from Citrobacter koseri (strain ATCC BAA-895 / CDC 4225-83 / SGSC4696).